A 133-amino-acid polypeptide reads, in one-letter code: Transcription antitermination protein NusB (133 aa).

It belongs to the NusB family.

Its function is as follows. Involved in transcription antitermination. Required for transcription of ribosomal RNA (rRNA) genes. Binds specifically to the boxA antiterminator sequence of the ribosomal RNA (rrn) operons. The protein is Transcription antitermination protein NusB of Clostridium novyi (strain NT).